We begin with the raw amino-acid sequence, 444 residues long: Glutamyl-tRNA reductase (444 aa).

Residues 49–52 (TCNR), serine 109, 114–116 (ETQ), and glutamine 120 contribute to the substrate site. Residue cysteine 50 is the Nucleophile of the active site. 189 to 194 (GAGKMG) contributes to the NADP(+) binding site.

It belongs to the glutamyl-tRNA reductase family. In terms of assembly, homodimer.

It catalyses the reaction (S)-4-amino-5-oxopentanoate + tRNA(Glu) + NADP(+) = L-glutamyl-tRNA(Glu) + NADPH + H(+). The protein operates within porphyrin-containing compound metabolism; protoporphyrin-IX biosynthesis; 5-aminolevulinate from L-glutamyl-tRNA(Glu): step 1/2. In terms of biological role, catalyzes the NADPH-dependent reduction of glutamyl-tRNA(Glu) to glutamate 1-semialdehyde (GSA). The chain is Glutamyl-tRNA reductase from Bacillus anthracis (strain A0248).